The following is a 75-amino-acid chain: Accessory gland-specific peptide 57Da (75 aa).

The signal sequence occupies residues 1–19; sequence MKFLALFVTLLVVLALVSA. Residues 55-75 are disordered; it reads AAPAAAPAAPEAGLADAPAES. Over residues 56-75 the composition is skewed to low complexity; sequence APAAAPAAPEAGLADAPAES.

Lumen fluid of male accessory glands, becomes seminal fluid.

It localises to the secreted. Its function is as follows. Transferred from male to female during mating and may affect egglaying and behavior after mating. This Drosophila melanogaster (Fruit fly) protein is Accessory gland-specific peptide 57Da (Mst57Da).